Consider the following 372-residue polypeptide: Alanine racemase (372 aa).

Lys-33 acts as the Proton acceptor; specific for D-alanine in catalysis. At Lys-33 the chain carries N6-(pyridoxal phosphate)lysine. Position 131 (Arg-131) interacts with substrate. Catalysis depends on Tyr-261, which acts as the Proton acceptor; specific for L-alanine. Met-309 contributes to the substrate binding site.

It belongs to the alanine racemase family. Pyridoxal 5'-phosphate is required as a cofactor.

It catalyses the reaction L-alanine = D-alanine. The protein operates within amino-acid biosynthesis; D-alanine biosynthesis; D-alanine from L-alanine: step 1/1. Functionally, catalyzes the interconversion of L-alanine and D-alanine. May also act on other amino acids. This chain is Alanine racemase (alr), found in Salinispora tropica (strain ATCC BAA-916 / DSM 44818 / JCM 13857 / NBRC 105044 / CNB-440).